Here is a 273-residue protein sequence, read N- to C-terminus: Serine acetyltransferase (273 aa).

The protein belongs to the transferase hexapeptide repeat family. In terms of assembly, homohexamer. Dimer of a homotrimer.

The protein localises to the cytoplasm. It catalyses the reaction L-serine + acetyl-CoA = O-acetyl-L-serine + CoA. It functions in the pathway amino-acid biosynthesis; L-cysteine biosynthesis; L-cysteine from L-serine: step 1/2. This chain is Serine acetyltransferase (cysE), found in Shigella flexneri.